The chain runs to 381 residues: Succinyl-diaminopimelate desuccinylase (381 aa).

His-69 is a binding site for Zn(2+). Asp-71 is an active-site residue. Asp-103 provides a ligand contact to Zn(2+). The active-site Proton acceptor is the Glu-137. Zn(2+) is bound by residues Glu-138, Glu-166, and His-355.

Belongs to the peptidase M20A family. DapE subfamily. In terms of assembly, homodimer. Zn(2+) serves as cofactor. The cofactor is Co(2+).

It catalyses the reaction N-succinyl-(2S,6S)-2,6-diaminopimelate + H2O = (2S,6S)-2,6-diaminopimelate + succinate. It participates in amino-acid biosynthesis; L-lysine biosynthesis via DAP pathway; LL-2,6-diaminopimelate from (S)-tetrahydrodipicolinate (succinylase route): step 3/3. Functionally, catalyzes the hydrolysis of N-succinyl-L,L-diaminopimelic acid (SDAP), forming succinate and LL-2,6-diaminopimelate (DAP), an intermediate involved in the bacterial biosynthesis of lysine and meso-diaminopimelic acid, an essential component of bacterial cell walls. The polypeptide is Succinyl-diaminopimelate desuccinylase (Rickettsia rickettsii (strain Iowa)).